A 426-amino-acid chain; its full sequence is Glutamate-1-semialdehyde 2,1-aminomutase (426 aa).

Residue K265 is modified to N6-(pyridoxal phosphate)lysine.

It belongs to the class-III pyridoxal-phosphate-dependent aminotransferase family. HemL subfamily. In terms of assembly, homodimer. Requires pyridoxal 5'-phosphate as cofactor.

It is found in the cytoplasm. It carries out the reaction (S)-4-amino-5-oxopentanoate = 5-aminolevulinate. It functions in the pathway porphyrin-containing compound metabolism; protoporphyrin-IX biosynthesis; 5-aminolevulinate from L-glutamyl-tRNA(Glu): step 2/2. This Akkermansia muciniphila (strain ATCC BAA-835 / DSM 22959 / JCM 33894 / BCRC 81048 / CCUG 64013 / CIP 107961 / Muc) protein is Glutamate-1-semialdehyde 2,1-aminomutase.